Reading from the N-terminus, the 343-residue chain is Dimethyladenosine transferase 1, mitochondrial (343 aa).

S-adenosyl-L-methionine is bound by residues Gln-28–Leu-31, Asn-29, Leu-31, Gly-56, Glu-78, Asp-133, and Asn-169.

It belongs to the class I-like SAM-binding methyltransferase superfamily. rRNA adenine N(6)-methyltransferase family. KsgA subfamily.

Its subcellular location is the mitochondrion. In terms of biological role, probable S-adenosyl-L-methionine-dependent methyltransferase which specifically dimethylates mitochondrial 12S rRNA at the conserved stem loop. Also required for basal transcription of mitochondrial DNA. Stimulates transcription independently of the methyltransferase activity. This chain is Dimethyladenosine transferase 1, mitochondrial, found in Vermamoeba vermiformis (Amoeba).